Consider the following 432-residue polypeptide: MPAIMEKNMLVSESLRTTELLGHVKPIDSVVTWSSPGSSRQAIGEAFKNTIEEIERAAVRGEPADSDAFFVADLNGVYRQLLRWHAKLPRVQPFYAVKCNPDPKVLALLNKFGTGFDCASKGELEQILGLGVSPDRIVYANPCKAITYVRYAASKGINLMTFDNADELYKVKQHHPNSRLLLRISTDDSNSLCRLSLKFGASLDDTGKLLDIAKSLELNVVGVSFHVGSGSYDPSAFLDAIQRSRQVFDQGLERGFNFDLLDIGGGFMNDSFDGVADLIRSALDTYFDPSIRVISEPGRFFVSSSFTLAVNVIAKRKLDDEEKVMYYVNDGVYGSLNCILFDHQHPVARVLKCGSRFVYNDLVGTGQHRCFIWGPTCDSLDVIANDAHLPYELNVGDWIYFEDAGAYTVAAASCFNGFKTSRIVYLDTDILD.

N6-(pyridoxal phosphate)lysine is present on Lys-98. Residues Ser-229, Gly-266, and 296-299 each bind pyridoxal 5'-phosphate; that span reads EPGR. 341 to 342 is a substrate binding site; sequence FD. The active-site Proton donor; shared with dimeric partner is Cys-377. Asp-378 serves as a coordination point for substrate. Tyr-407 contacts pyridoxal 5'-phosphate.

It belongs to the Orn/Lys/Arg decarboxylase class-II family. As to quaternary structure, homodimer. Only the dimer is catalytically active, as the active sites are constructed of residues from both monomers. Pyridoxal 5'-phosphate serves as cofactor.

The protein resides in the cytoplasm. It catalyses the reaction L-ornithine + H(+) = putrescine + CO2. It participates in amine and polyamine biosynthesis; putrescine biosynthesis via L-ornithine pathway; putrescine from L-ornithine: step 1/1. With respect to regulation, inhibited by antizyme (AZ) OAZ1 in response to polyamine levels. AZ inhibits the assembly of the functional homodimer by binding to ODC monomers and targeting them for ubiquitin-independent proteolytic destruction by the 26S proteasome. Its function is as follows. Catalyzes the first and rate-limiting step of polyamine biosynthesis that converts ornithine into putrescine, which is the precursor for the polyamines, spermidine and spermine. Polyamines are essential for cell proliferation and are implicated in cellular processes, ranging from DNA replication to apoptosis. The chain is Ornithine decarboxylase (spe1) from Schizosaccharomyces pombe (strain 972 / ATCC 24843) (Fission yeast).